A 402-amino-acid chain; its full sequence is MVTLITEKLQNQSLDDLTRRACEAGPYSAEKLNKSGHLFPLEISVDKSPWKALRGGWPTGSQAASGPFSVGPHGVSHTEGLKWQLESPGPMDVGHFLDLHDSTGPPAAPPTKRHCRSLSEPEELARCRSPWRPGSSKVWTPISKRRCNSGGSATLQCCSGVGNPTLQGTLVPGLPRRPVSPAGPTSPLTPRPASASSGFVDGSEGSTSSGPPWLSTGPCPFSSRRRLSLSQEHLVDTGACLPSASSTPTSTPELGRHHGLLRCRSQPCVLDGRRVRRKRRREEDARWTRPSLDFLKMTRTLKNSKSLCSLDYEDDEDDTQEKTLVSSPCNSQGLVGIITPSSSPRIPRPGPDSPSIWASGEPEANPGEGGSSGDPSDWDSAGEEGIFPLDHGDLDLEQIENN.

A Phosphoserine modification is found at S119. Positions L170 to S215 are disordered. The Nuclear localization signal motif lies at R273–R281. Phosphoserine occurs at positions 306 and 309. Polar residues predominate over residues T323–G333. The tract at residues T323–N402 is disordered. Over residues G336–R345 the composition is skewed to low complexity.

The protein belongs to the FAM53 family.

The protein localises to the nucleus. In terms of biological role, may play an important role in neural development; the dorsomedial roof of the third ventricle. The protein is Protein FAM53A of Mus musculus (Mouse).